Reading from the N-terminus, the 190-residue chain is Cancer-related nucleoside-triphosphatase (190 aa).

Ala-2 bears the N-acetylalanine mark. Residues 9 to 16 (GPPGVGKT) and 109 to 116 (VCVIDEIG) contribute to the ATP site. Position 165 is an N6-acetyllysine (Lys-165).

This sequence belongs to the THEP1 NTPase family. Monomer.

It catalyses the reaction a ribonucleoside 5'-triphosphate + H2O = a ribonucleoside 5'-diphosphate + phosphate + H(+). It carries out the reaction 5-methyl-UTP + H2O = 5-methyl-UDP + phosphate + H(+). The catalysed reaction is CTP + H2O = CDP + phosphate + H(+). The enzyme catalyses ATP + H2O = ADP + phosphate + H(+). It catalyses the reaction GTP + H2O = GDP + phosphate + H(+). Has nucleotide phosphatase activity towards ATP, GTP, CTP, TTP and UTP. Hydrolyzes nucleoside diphosphates with lower efficiency. The polypeptide is Cancer-related nucleoside-triphosphatase (Homo sapiens (Human)).